A 608-amino-acid polypeptide reads, in one-letter code: Lysophospholipase 2 (608 aa).

Residues 1–17 (MLVWQSILLFLVGCVLS) form the signal peptide. The region spanning 30–564 (QCPEGKLTRS…ENYCWDGTIY (535 aa)) is the PLA2c domain. Residues Asn259, Asn365, Asn450, Asn464, Asn491, and Asn572 are each glycosylated (N-linked (GlcNAc...) asparagine).

The protein belongs to the lysophospholipase family.

The protein localises to the secreted. The enzyme catalyses a 1-acyl-sn-glycero-3-phosphocholine + H2O = sn-glycerol 3-phosphocholine + a fatty acid + H(+). In terms of biological role, catalyzes the release of fatty acids from lysophospholipids. Phospholipase B may well contribute to pathogenicity by abetting the fungus in damaging and traversing host cell membranes, processes which likely increase the rapidity of disseminated infection. The sequence is that of Lysophospholipase 2 (PLB2) from Candida albicans (Yeast).